The chain runs to 357 residues: Putative electron transport protein YccM (357 aa).

The Cytoplasmic portion of the chain corresponds to 1 to 36; it reads MAENKRTRWQRRPGTTGGKLPWNDWRNATTWRKATQ. A helical membrane pass occupies residues 37-54; it reads LLLLAMNIYIAITFWYWV. The Periplasmic segment spans residues 55–91; it reads RYYETASSTTFVARPGGIEGWLPIAGLMNLKYSLVTG. Residues 92–114 traverse the membrane as a helical segment; sequence QLPSVHAAAMLLLVAFIVISLLL. Over 115–158 the chain is Cytoplasmic; it reads KKAFCSWLCPVGTLSELIGDLGNKLFGRQCVLPRWLDIPLRGVK. Residues 159 to 181 traverse the membrane as a helical segment; the sequence is YLLLSFFIYIALLMPAQAIHYFM. Residues 182 to 195 lie on the Periplasmic side of the membrane; it reads LSPYSVVMDVKMLD. The chain crosses the membrane as a helical span at residues 196–218; it reads FFRHMGTATLISVTVLLIASLFI. Residues 219–309 lie on the Cytoplasmic side of the membrane; the sequence is RHAWCRYLCP…KPAANKKAFA (91 aa). 2 4Fe-4S ferredoxin-type domains span residues 242–270 and 269–299; these read FKIR…VDKL and KLIQ…FSLQ. Positions 251, 254, 257, 261, 278, 281, 284, and 288 each coordinate [4Fe-4S] cluster. Residues 310-332 traverse the membrane as a helical segment; it reads LSGWLMTLLVLGIMFAVIGYAMY. Residues 333 to 357 lie on the Periplasmic side of the membrane; sequence AGVWQSPVPEELYRRLIPQAPMIGH.

The protein localises to the cell inner membrane. This Escherichia coli (strain K12) protein is Putative electron transport protein YccM (yccM).